The following is a 911-amino-acid chain: MMLRSAGGSIRRAITQRQNQHRFYRPGHGVFGHLPDPPKRVFENQGGLTPENAQRVHLINAFRRYGYLEADLDPLGLRKVESVAELDPAIYGLSLDENVKGNFSLHDLAEQLRHIYCGPTAIEFMHINNWEERQWISQNFENCIAEELRKEELLRIGDLMLKCENFDKFLSTKFPTLKRYGAEGAESMFAFFSELFEGAAEKQVEEIIIGIAHRGRLNLLTQLMDFPPVHMFRKIKGRAEFPESADAAGDVLSHLVSSFDYKGSEGNVHVTMLPNPSHLEAVNPVAMGKARARAWSMNKGDYSPDERSARAGDSVLNVLVHGDGAFTGQGVVWESIALSQAPHFRLGGTVHLVTNNQIAFTAESSVGRSSTHCTDIAKAFEYPVIHVNGDHPEEVVKATRLALAYRERFRKDVFINLVCFRRWGHNELDDPTFTSPVMYKEVEARESVPRLFLDRLVEEGFTTEEAVKEQLQKHTEQLNNELKKVDSTVPIDISHRGRWEGFKQAPKAIESWDTGVATDLLRFIGAGSVKVPEDFDTHKHLYKMHIDSRMQKMQTGEGIDWATAEAMAFGSILLEGNDVRISGQDVGRGTFCHRHAMMVDQSTDHIHIPLNELVEEQKNQLEVANNLLSEEAILGFEWGFSSENPRRLCIWEAQFGDFFNGAQIIIDTFLASAESKWLTSSGLTMLLPHGFDGAGPEHSSCRMERFLQLCDSREDQTPVDGENVNMRVANPTTSAQYFHLLRRQVVPNYRKPLIVVGPKILLRHPKAASTINEFGPGTTYQNVISEEHATSSQKIKKVIFVSGKHWINVEKARDERGLKDSVAIVRVEMLCPFPVVDLQAVLKKYPGAQDFVWSQEEPRNAGAWSFVRPRFENALGVRLKFAGRPELAWTATAIGEHHTKEAEEVINQTFA.

It belongs to the alpha-ketoglutarate dehydrogenase family. Thiamine diphosphate serves as cofactor.

It localises to the mitochondrion. The enzyme catalyses N(6)-[(R)-lipoyl]-L-lysyl-[protein] + 2-oxoadipate + H(+) = N(6)-[(R)-S(8)-glutaryldihydrolipoyl]-L-lysyl-[protein] + CO2. 2-oxoadipate dehydrogenase (E1a) component of the 2-oxoadipate dehydrogenase complex (OADHC). Participates in the first step, rate limiting for the overall conversion of 2-oxoadipate (alpha-ketoadipate) to glutaryl-CoA and CO(2) catalyzed by the whole OADHC. Catalyzes the irreversible decarboxylation of 2-oxoadipate via the thiamine diphosphate (ThDP) cofactor and subsequent transfer of the decarboxylated acyl intermediate on an oxidized dihydrolipoyl group that is covalently amidated to the E2 enzyme (dihydrolipoyllysine-residue succinyltransferase or DLST). In Caenorhabditis elegans, this protein is Probable 2-oxoadipate dehydrogenase complex component E1 homolog.